A 354-amino-acid chain; its full sequence is Alkanal monooxygenase alpha chain (354 aa).

It belongs to the bacterial luciferase oxidoreductase family. As to quaternary structure, heterodimer of an alpha and a beta chain.

It carries out the reaction a long-chain fatty aldehyde + FMNH2 + O2 = a long-chain fatty acid + hnu + FMN + H2O + 2 H(+). Its function is as follows. Light-emitting reaction in luminous bacteria. The chain is Alkanal monooxygenase alpha chain (luxA) from Aliivibrio fischeri (Vibrio fischeri).